A 380-amino-acid polypeptide reads, in one-letter code: Alanine racemase (380 aa).

The active-site Proton acceptor; specific for D-alanine is the Lys-41. Lys-41 bears the N6-(pyridoxal phosphate)lysine mark. A substrate-binding site is contributed by Arg-141. The active-site Proton acceptor; specific for L-alanine is Tyr-271. Met-318 serves as a coordination point for substrate.

It belongs to the alanine racemase family. The cofactor is pyridoxal 5'-phosphate.

It carries out the reaction L-alanine = D-alanine. Its pathway is amino-acid biosynthesis; D-alanine biosynthesis; D-alanine from L-alanine: step 1/1. In terms of biological role, catalyzes the interconversion of L-alanine and D-alanine. May also act on other amino acids. This Latilactobacillus sakei subsp. sakei (strain 23K) (Lactobacillus sakei subsp. sakei) protein is Alanine racemase (alr).